Here is a 295-residue protein sequence, read N- to C-terminus: ATP synthase gamma chain (295 aa).

It belongs to the ATPase gamma chain family. In terms of assembly, F-type ATPases have 2 components, CF(1) - the catalytic core - and CF(0) - the membrane proton channel. CF(1) has five subunits: alpha(3), beta(3), gamma(1), delta(1), epsilon(1). CF(0) has three main subunits: a, b and c.

It localises to the cell membrane. In terms of biological role, produces ATP from ADP in the presence of a proton gradient across the membrane. The gamma chain is believed to be important in regulating ATPase activity and the flow of protons through the CF(0) complex. The polypeptide is ATP synthase gamma chain (Acetivibrio thermocellus (strain ATCC 27405 / DSM 1237 / JCM 9322 / NBRC 103400 / NCIMB 10682 / NRRL B-4536 / VPI 7372) (Clostridium thermocellum)).